Consider the following 317-residue polypeptide: Glutamyl-tRNA reductase-binding protein, chloroplastic (317 aa).

Residues 1–42 (MQLQTQSFALNLLPSPNFAKPIERREFISLKRDPSRPISLRC) constitute a chloroplast transit peptide.

As to quaternary structure, interacts with HEMA1 and forms a heterotetramer of two GLUTRBP and two HEMA1 subunits.

It localises to the plastid. The protein resides in the chloroplast stroma. Functionally, involved in the regulation of glutamyl-tRNA reductase (GluTR) which is important for the synthesis and distribution of 5-aminolevulinate, a precursor in heme and chlorophyll biosynthesis. Stimulates GluTR activity and regulates glutamate-1-semialdehyde release. May play a role in heme metabolism. Necessary for efficient photosynthetic electron transport in chloroplasts. In Arabidopsis thaliana (Mouse-ear cress), this protein is Glutamyl-tRNA reductase-binding protein, chloroplastic.